The chain runs to 1002 residues: MRPAARMPNLTRRSRVMIAVALAVVVLLLLGPRLVDTYVNWLWFGELGYRSVFTTQIVTRLLLFLAVAVVFGAVVFAAMALAYRTRPVFVPTAGPNDPIARYRTAVMARLRLVGIGVPVAVGLLAGLIAQNYWQRVQLFLHGGSFGVSDPQFGIDLGFYAFDLPFYRLMLTYLFAATFLAFIANLLGHYLFGGIRLAGRSGALSRAARIQLIALVGFLMLLKAVAYWLDRYELLSHTRGGKPFTGAGYTDINAVLPAKLILMVIAVICAAAVFSAIVLRDLRIPAIGVVLLLLSSLIVGAGWPLVVEQISVRPNAAQKESEYISRSITATRQAYGLTDEAVEYRDYPGNATATAQQVAADRATTSNIRVLDPNIVSPAFTQFQQGKNFYFFPDQLNMDRYRDEDGNLRDYVVAARELNPDRLIDNQRDWINRHSVYTHGNGFIASPANTVRGIANDPNQNGGYPEFLASVVGANGEVVSPGPAPLDQPRIYFGPVIANTPADYAIVGESGTPREYDYETNTATRNYTYTGSGGVPIGNWLTRSVFAAKYAERNFLFSNVIGENSKILFNRDPADRVEAVAPWLTTDTAVYPAIVNKRIVWIVDGYTTLDNYPYSELMSLSSATTDSNEVALNRLQPDKQVSYIRNSVKATVDAYDGTVTLYAQDEQDPVLQAWMKVFPDTVKPKADITPELQEHLRYPEDLFKVQRALLAKYHVDDPVTFFSTSDFWDVPLDPNPTASSYQPPYYIVAKDLAENNNSSSFQLTSAMNRFRRDFLAAYISASSDPETYGKLTVLTIPGQVNGPKLAFNAISTDTAVSQDLGVIGRDNQNRIRWGNLLTLPMGQGGLLYVAPVYASPGASDAASSYPRLIRVAMMYNDQIGYGPTVRDALTDLFGPGADATATGPAATEPPAGQAPQPQGNNQPPAAAPPNRPGQAPTPQQPEVPVAVPPTGPTQLSAGKAAALQDVNAALDALQDAQRSGDFAQYGEALQRLDDAVNKYQATN.

The next 7 membrane-spanning stretches (helical) occupy residues 16 to 36 (VMIA…RLVD), 61 to 81 (LLLF…AMAL), 112 to 132 (LVGI…AQNY), 174 to 194 (FAAT…FGGI), 209 to 229 (IQLI…YWLD), 258 to 278 (KLIL…AIVL), and 286 to 306 (IGVV…PLVV). The interval 891–958 (LFGPGADATA…TGPTQLSAGK (68 aa)) is disordered. A compositionally biased stretch (low complexity) spans 893-923 (GPGADATATGPAATEPPAGQAPQPQGNNQPP). The segment covering 937–950 (PQQPEVPVAVPPTG) has biased composition (pro residues).

Belongs to the UPF0182 family.

Its subcellular location is the cell membrane. In Mycolicibacterium vanbaalenii (strain DSM 7251 / JCM 13017 / BCRC 16820 / KCTC 9966 / NRRL B-24157 / PYR-1) (Mycobacterium vanbaalenii), this protein is UPF0182 protein Mvan_1814.